The chain runs to 463 residues: Glycine--tRNA ligase (463 aa).

Substrate-binding residues include arginine 98 and glutamate 174. ATP contacts are provided by residues 206–208 (RNE), 216–221 (FRTREF), 290–291 (EL), and 334–337 (GADR). 221–225 (FEQME) provides a ligand contact to substrate. Substrate is bound at residue 330–334 (EPSLG).

The protein belongs to the class-II aminoacyl-tRNA synthetase family. As to quaternary structure, homodimer.

The protein resides in the cytoplasm. It catalyses the reaction tRNA(Gly) + glycine + ATP = glycyl-tRNA(Gly) + AMP + diphosphate. Catalyzes the attachment of glycine to tRNA(Gly). This is Glycine--tRNA ligase from Staphylococcus aureus (strain bovine RF122 / ET3-1).